Reading from the N-terminus, the 429-residue chain is Xyloglucan O-acetyltransferase 1 (429 aa).

At 1–20 the chain is on the cytoplasmic side; it reads MGSPFKDHHHHHHPFSLAKK. A helical; Signal-anchor for type II membrane protein membrane pass occupies residues 21 to 41; the sequence is LIPWTFYAMIPLVLFRLYFYP. Residues 42 to 429 lie on the Lumenal side of the membrane; the sequence is YPLHNITTPI…KWDYESRREE (388 aa). N-linked (GlcNAc...) asparagine glycans are attached at residues Asn46 and Asn89. Disulfide bonds link Cys72–Cys122, Cys93–Cys158, Cys102–Cys402, and Cys317–Cys398. The GDS motif signature appears at 145-147; the sequence is GDS. Ser147 acts as the Nucleophile in catalysis. Residues Asn189, Asn263, and Asn351 are each glycosylated (N-linked (GlcNAc...) asparagine). The active-site Proton donor is Asp397. A DXXH motif motif is present at residues 397 to 400; it reads DCVH. Catalysis depends on His400, which acts as the Proton acceptor.

It belongs to the PC-esterase family. TBL subfamily.

It is found in the golgi apparatus membrane. Its function is as follows. Xyloglucan acetyltransferase that catalyzes the acetylation of fucosylated Gal residues on xyloglucan side chains. Predominantly catalyze 6-O-monoacetylation of Gal residues in the Fuc-Gal-Xyl trisaccharide side chains of xyloglucan oligomers. This Populus trichocarpa (Western balsam poplar) protein is Xyloglucan O-acetyltransferase 1.